Reading from the N-terminus, the 162-residue chain is NADH-quinone oxidoreductase subunit I (162 aa).

4Fe-4S ferredoxin-type domains are found at residues 54-83 (RRYE…INST) and 93-122 (SSYE…ETNI). C63, C66, C69, C73, C102, C105, C108, and C112 together coordinate [4Fe-4S] cluster.

Belongs to the complex I 23 kDa subunit family. NDH-1 is composed of 14 different subunits. Subunits NuoA, H, J, K, L, M, N constitute the membrane sector of the complex. [4Fe-4S] cluster is required as a cofactor.

It localises to the cell inner membrane. It carries out the reaction a quinone + NADH + 5 H(+)(in) = a quinol + NAD(+) + 4 H(+)(out). Functionally, NDH-1 shuttles electrons from NADH, via FMN and iron-sulfur (Fe-S) centers, to quinones in the respiratory chain. The immediate electron acceptor for the enzyme in this species is believed to be ubiquinone. Couples the redox reaction to proton translocation (for every two electrons transferred, four hydrogen ions are translocated across the cytoplasmic membrane), and thus conserves the redox energy in a proton gradient. In Francisella tularensis subsp. holarctica (strain FTNF002-00 / FTA), this protein is NADH-quinone oxidoreductase subunit I.